Reading from the N-terminus, the 292-residue chain is Probable endonuclease 4 (292 aa).

Histidine 69, histidine 109, glutamate 145, aspartate 179, histidine 182, histidine 216, aspartate 229, histidine 231, and glutamate 261 together coordinate Zn(2+).

Belongs to the AP endonuclease 2 family. Zn(2+) is required as a cofactor.

The enzyme catalyses Endonucleolytic cleavage to 5'-phosphooligonucleotide end-products.. Its function is as follows. Endonuclease IV plays a role in DNA repair. It cleaves phosphodiester bonds at apurinic or apyrimidinic (AP) sites, generating a 3'-hydroxyl group and a 5'-terminal sugar phosphate. This chain is Probable endonuclease 4, found in Desulfotalea psychrophila (strain LSv54 / DSM 12343).